Here is a 435-residue protein sequence, read N- to C-terminus: Probable aminotransferase gliI (435 aa).

Lysine 266 carries the N6-(pyridoxal phosphate)lysine modification.

It belongs to the class-I pyridoxal-phosphate-dependent aminotransferase family. The cofactor is pyridoxal 5'-phosphate.

Its pathway is mycotoxin biosynthesis. Functionally, probable aminotransferase; part of the gene cluster that mediates the biosynthesis of gliotoxin, a member of the epipolythiodioxopiperazine (ETP) class of toxins characterized by a disulfide bridged cyclic dipeptide. The first step in gliotoxin biosynthesis is the condensation of serine and phenylalanine to form the cyclo-L-phenylalanyl-L-serine diketopiperazine (DKP) by the NRPS gliP. GliP is also able to produce the DKP cyclo-L-tryptophanyl-L-serine, suggesting that the substrate specificity of the first adenylation (A) domain in gliP is sufficiently relaxed to accommodate both L-Phe and L-Trp. The cytochrome P450 monooxygenase gliC has been shown to catalyze the subsequent hydroxylation of the alpha-carbon of L-Phe in cyclo-L-phenylalanyl-L-serine whereas the second cytochrome P450 enzyme, gliF, is presumably involved in the modification of the DKP side chain. The glutathione S-transferase (GST) gliG then forms a bis-glutathionylated biosynthetic intermediate which is responsible for the sulfurization of gliotoxin. This bis-glutathionylated intermediate is subsequently processed by the gamma-glutamyl cyclotransferase gliK to remove both gamma-glutamyl moieties. Subsequent processing via gliI yields a biosynthetic intermediate, which is N-methylated via the N-methyltransferase gliN, before the gliotoxin oxidoreductase gliT-mediated disulfide bridge closure. GliN-mediated amide methylation confers stability to ETP, damping the spontaneous formation of tri- and tetrasulfides. Intracellular dithiol gliotoxin oxidized by gliT is subsequently effluxed by gliA. Gliotoxin contributes to pathogenesis during invasive aspergillosis. In macrophages and neutrophils, gliotoxin showed inhibition of various different cell functions including cytokine production, antigen presentation, phagocytosis, and production of reactive oxygen species. This is Probable aminotransferase gliI from Aspergillus fumigatus (strain ATCC MYA-4609 / CBS 101355 / FGSC A1100 / Af293) (Neosartorya fumigata).